The chain runs to 2070 residues: Multiple PDZ domain protein (2070 aa).

Residues 1–63 enclose the L27 domain; the sequence is MLEAIDKNRA…SVQQLKDQVN (63 aa). Residues 137–224 enclose the PDZ 1 domain; the sequence is VFELLKPPSG…TVQLVIARGS (88 aa). S230 is modified (phosphoserine). 2 PDZ domains span residues 257 to 337 and 377 to 463; these read TIEL…ARGA and DVEL…MRRG. S483 is subject to Phosphoserine. 2 PDZ domains span residues 553 to 634 and 700 to 786; these read VAHV…CRRT and HIEL…VAKP. S790 and S1078 each carry phosphoserine. The PDZ 6 domain occupies 1008 to 1089; that stretch reads TINIAKGNSS…IGPDIKITYV (82 aa). A disordered region spans residues 1121 to 1140; sequence DIPELPEREEGEGEESELQN. Residues 1151 to 1243 enclose the PDZ 7 domain; it reads RVELWREPSK…PVVFMVQSII (93 aa). At R1170 the chain carries Omega-N-methylarginine. Positions 1278–1324 are disordered; the sequence is ADKAPSQSESEPEKAPLCSVPPPPPSAFAEMGSDHTQSSASKISQDV. Over residues 1311–1321 the composition is skewed to polar residues; sequence DHTQSSASKIS. PDZ domains follow at residues 1350–1433 and 1483–1564; these read MIEL…IRNK and HLEL…HAEN. The disordered stretch occupies residues 1567 to 1612; it reads SQAVPSAAGAASGEKKNSSQSLMVPQSGSPEPESIRNTSRSSTPAI. Residues 1584–1610 are compositionally biased toward polar residues; that stretch reads SSQSLMVPQSGSPEPESIRNTSRSSTP. PDZ domains are found at residues 1629 to 1712 and 1725 to 1807; these read TIEI…YRDE and TIEL…GRIK. Phosphoserine is present on residues S1818 and S1824. 2 PDZ domains span residues 1862–1948 and 1987–2070; these read TVEM…VAGG and SITL…MVLS.

As to quaternary structure, interacts with CLDN5, DLG4, GRIN1, F11R/JAM, CLDN1, NG2, CRB1, MPP4 and PALS1. Interacts with HTR2A, HTR2B, HTR2C, PLEKHA1/TAPP1, PLEKHA2/TAPP2, CXADR, SYNGAP1, CAMK2A and CAMK2B. Interacts with FAT4 (via cytoplasmic domain). Interacts with DLL1. (Microbial infection) Interacts with human adenovirus type 9 E4-ORF1 protein. In terms of assembly, (Microbial infection) Interacts with human papillomavirus 18/HPV18 protein E6. As to expression, expressed in heart, brain, placenta, liver, skeletal muscle, kidney and pancreas.

It is found in the cell membrane. It localises to the apical cell membrane. The protein resides in the postsynaptic density. Its subcellular location is the cell projection. The protein localises to the dendrite. It is found in the cell junction. It localises to the tight junction. The protein resides in the synapse. Its subcellular location is the synaptosome. In terms of biological role, member of the NMDAR signaling complex that may play a role in control of AMPAR potentiation and synaptic plasticity in excitatory synapses. Promotes clustering of HT2RC at the cell surface. This is Multiple PDZ domain protein (MPDZ) from Homo sapiens (Human).